The primary structure comprises 147 residues: 3-dehydroquinate dehydratase (147 aa).

Tyr23 (proton acceptor) is an active-site residue. Residues Asn75, His81, and Asp88 each contribute to the substrate site. The Proton donor role is filled by His101. Substrate contacts are provided by residues 102 to 103 (LS) and Arg112.

It belongs to the type-II 3-dehydroquinase family. As to quaternary structure, homododecamer.

The catalysed reaction is 3-dehydroquinate = 3-dehydroshikimate + H2O. Its pathway is metabolic intermediate biosynthesis; chorismate biosynthesis; chorismate from D-erythrose 4-phosphate and phosphoenolpyruvate: step 3/7. In terms of biological role, catalyzes a trans-dehydration via an enolate intermediate. In Thioalkalivibrio sulfidiphilus (strain HL-EbGR7), this protein is 3-dehydroquinate dehydratase.